A 288-amino-acid polypeptide reads, in one-letter code: tRNA-cytidine(32) 2-sulfurtransferase (288 aa).

Positions 70 to 75 (SGGKDS) match the PP-loop motif motif. Residues C145, C148, and C236 each coordinate [4Fe-4S] cluster.

The protein belongs to the TtcA family. In terms of assembly, homodimer. Mg(2+) serves as cofactor. [4Fe-4S] cluster is required as a cofactor.

The protein localises to the cytoplasm. The enzyme catalyses cytidine(32) in tRNA + S-sulfanyl-L-cysteinyl-[cysteine desulfurase] + AH2 + ATP = 2-thiocytidine(32) in tRNA + L-cysteinyl-[cysteine desulfurase] + A + AMP + diphosphate + H(+). It participates in tRNA modification. Its function is as follows. Catalyzes the ATP-dependent 2-thiolation of cytidine in position 32 of tRNA, to form 2-thiocytidine (s(2)C32). The sulfur atoms are provided by the cysteine/cysteine desulfurase (IscS) system. In Bartonella tribocorum (strain CIP 105476 / IBS 506), this protein is tRNA-cytidine(32) 2-sulfurtransferase.